Reading from the N-terminus, the 628-residue chain is FAD-linked oxidoreductase hmp9 (628 aa).

The signal sequence occupies residues Met-1–Ala-29. A disordered region spans residues Gly-34–Asp-53. Residues Asn-80 and Asn-133 are each glycosylated (N-linked (GlcNAc...) asparagine). In terms of domain architecture, FAD-binding PCMH-type spans Leu-152–Asn-337. N-linked (GlcNAc...) asparagine glycosylation is present at Asn-356.

This sequence belongs to the oxygen-dependent FAD-linked oxidoreductase family.

It functions in the pathway secondary metabolite biosynthesis. Its function is as follows. FAD-linked oxidoreductase; part of the gene cluster that mediates the biosynthesis of hypothemycin, a resorcylic acid lactone (RAL) that irreversibly inhibits a subset of protein kinases with a conserved cysteine in the ATP binding site such as human ERK2. The first step is performed by both PKSs hmp3 and hmp8 and leads to the production of 7',8'-dehydrozearalenol (DHZ). The highly reducing PKS hpm8 synthesizes the reduced hexaketide (7S,11S,2E,8E)-7,11-dihydroxy-dodeca-2,8-dienoate, which is transferred downstream to the non-reducing PKS hpm3. Hpm3 then extends the reduced hexaketide to a nonaketide, after which regioselective cyclization and macrolactonization affords DHZ. The next step is the conversion of DHZ into aigialomycin C and is performed by the O-methyltransferase hmp5, the FAD-binding monooxygenase hmp7, and the cytochrome P450 monooxygenase hmp1. The wide substrate tolerance of the hmp5 and hmp7 implies that the reactions from DHZ to aigialomycin C can occur in any order. The steps from aigialomycin C to hypothemycin are less well established. The FAD-linked oxidoreductase hmp9 presumably catalyzes oxidation of the C-6' hydroxyl to a ketone. The timing of this oxidation is important, since the resulting enone functional group is a Michael acceptor that can react spontaneously with glutathione, an abundant metabolite in fungal cells. The glutathione S-transferase hmp2 catalyzes cis-trans isomerization of the 7',8' double bond with equilibrium favoring the trans isomer. The hpm6-encoded transporter might preferentially pump hypothemycin out of the cell relative to the trans isomer aigialomycin A. The cis-to-trans isomerization may be coupled with C-4' hydroxylation, since all known hypothemycin analogs containing the enone functional group also have hydroxyl groups at both C-4' and C-5'. The protein is FAD-linked oxidoreductase hmp9 of Hypomyces subiculosus (Nectria subiculosa).